The sequence spans 307 residues: F-box protein At2g23160 (307 aa).

An F-box domain is found at 2–49 (NSSSPISIDLIAEILSRVPSKSVARFRCVSKPWASMIRRPYFTELFLT).

This is F-box protein At2g23160 from Arabidopsis thaliana (Mouse-ear cress).